The chain runs to 61 residues: Small ribosomal subunit protein uS14 (61 aa).

Zn(2+) is bound by residues cysteine 24, cysteine 27, cysteine 40, and cysteine 43.

The protein belongs to the universal ribosomal protein uS14 family. Zinc-binding uS14 subfamily. Part of the 30S ribosomal subunit. Contacts proteins S3 and S10. The cofactor is Zn(2+).

Functionally, binds 16S rRNA, required for the assembly of 30S particles and may also be responsible for determining the conformation of the 16S rRNA at the A site. In Leptospira borgpetersenii serovar Hardjo-bovis (strain JB197), this protein is Small ribosomal subunit protein uS14.